The following is a 240-amino-acid chain: MLTLGVNIDHVATIRQARRTVEPDPVAAAVLAELGGANGITAHLREDRRHMQDRDIRILRETVRTHLNLEMAATEEMVAIALDIKPDYVTLVPEKREEVTTEGGLDIAGSLEKLKNVVDRLQSANIPVSLFIDADEAQIKASAETQAKFIELHTGKYADAPNAEIRQKELESLKLGCEQALSLGLRVNAGHGLTYINVYPVACLPGMEELNIGHTIVSRAVLVGMERAVREMKLAMRGEL.

N7 is a 3-amino-2-oxopropyl phosphate binding site. 9 to 10 (DH) contacts 1-deoxy-D-xylulose 5-phosphate. 3-amino-2-oxopropyl phosphate is bound at residue R18. H43 functions as the Proton acceptor in the catalytic mechanism. 1-deoxy-D-xylulose 5-phosphate contacts are provided by R45 and H50. E70 (proton acceptor) is an active-site residue. T100 contacts 1-deoxy-D-xylulose 5-phosphate. Residue H191 is the Proton donor of the active site. 3-amino-2-oxopropyl phosphate-binding positions include G192 and 213 to 214 (GH).

Belongs to the PNP synthase family. Homooctamer; tetramer of dimers.

It is found in the cytoplasm. It catalyses the reaction 3-amino-2-oxopropyl phosphate + 1-deoxy-D-xylulose 5-phosphate = pyridoxine 5'-phosphate + phosphate + 2 H2O + H(+). It functions in the pathway cofactor biosynthesis; pyridoxine 5'-phosphate biosynthesis; pyridoxine 5'-phosphate from D-erythrose 4-phosphate: step 5/5. Functionally, catalyzes the complicated ring closure reaction between the two acyclic compounds 1-deoxy-D-xylulose-5-phosphate (DXP) and 3-amino-2-oxopropyl phosphate (1-amino-acetone-3-phosphate or AAP) to form pyridoxine 5'-phosphate (PNP) and inorganic phosphate. This is Pyridoxine 5'-phosphate synthase from Crocosphaera subtropica (strain ATCC 51142 / BH68) (Cyanothece sp. (strain ATCC 51142)).